Consider the following 156-residue polypeptide: Small ribosomal subunit protein uS7 (156 aa).

It belongs to the universal ribosomal protein uS7 family. As to quaternary structure, part of the 30S ribosomal subunit. Contacts proteins S9 and S11.

Functionally, one of the primary rRNA binding proteins, it binds directly to 16S rRNA where it nucleates assembly of the head domain of the 30S subunit. Is located at the subunit interface close to the decoding center, probably blocks exit of the E-site tRNA. In Prochlorococcus marinus subsp. pastoris (strain CCMP1986 / NIES-2087 / MED4), this protein is Small ribosomal subunit protein uS7.